Reading from the N-terminus, the 365-residue chain is Eukaryotic translation initiation factor 3 subunit H (365 aa).

Residues 11–160 (VKVEALVVMK…LRAFRLSPKF (150 aa)) enclose the MPN domain.

The protein belongs to the eIF-3 subunit H family. In terms of assembly, component of the eukaryotic translation initiation factor 3 (eIF-3) complex.

Its subcellular location is the cytoplasm. Functionally, component of the eukaryotic translation initiation factor 3 (eIF-3) complex, which is involved in protein synthesis of a specialized repertoire of mRNAs and, together with other initiation factors, stimulates binding of mRNA and methionyl-tRNAi to the 40S ribosome. The eIF-3 complex specifically targets and initiates translation of a subset of mRNAs involved in cell proliferation. This is Eukaryotic translation initiation factor 3 subunit H from Aspergillus fumigatus (strain CBS 144.89 / FGSC A1163 / CEA10) (Neosartorya fumigata).